The chain runs to 198 residues: MIEKAISRRIKEFRQLGEKGEVEFDFRPFLDFSVKATIRTELAFCISTANSSATAGLKFQRLLGQGVGVKEALTLAGVRFHNRKAEYIREAFKSFKLVEKALEAESSKAREILLKIKGLGMKEASHFLRNVGREDVAIIDRHILRWLERQGYEVPGTMTAKKYLEVEKILMEISEERGESLAEMDLRIWAEMTGKVLK.

Active-site residues include lysine 122 and aspartate 140.

Belongs to the type-2 OGG1 family. As to quaternary structure, monomer.

The catalysed reaction is 2'-deoxyribonucleotide-(2'-deoxyribose 5'-phosphate)-2'-deoxyribonucleotide-DNA = a 3'-end 2'-deoxyribonucleotide-(2,3-dehydro-2,3-deoxyribose 5'-phosphate)-DNA + a 5'-end 5'-phospho-2'-deoxyribonucleoside-DNA + H(+). Catalyzes the excision of an oxidatively damaged form of guanine (7,8-dihydro-8-oxoguanine = 8-oxoG) from DNA. Also cleaves the DNA backbone at apurinic/apyrimidinic sites (AP sites). Efficiently cleaves oligomers containing 8-oxoG:C and 8-oxoG:G base pairs, and is less effective on oligomers containing 8-oxoG:T and 8-oxoG:A mispairs. The protein is 8-oxoguanine DNA glycosylase/AP lyase of Archaeoglobus fulgidus (strain ATCC 49558 / DSM 4304 / JCM 9628 / NBRC 100126 / VC-16).